A 174-amino-acid polypeptide reads, in one-letter code: Male-enhanced antigen 1 (174 aa).

2 disordered regions span residues 1 to 77 and 94 to 123; these read MAAV…PVGD and LHLP…IPMD. Composition is skewed to acidic residues over residues 38 to 48, 65 to 77, and 101 to 110; these read SSEEPEEEQEE, PEQE…PVGD, and LESEDEDEEG. The residue at position 103 (S103) is a Phosphoserine.

Functionally, may play an important role in spermatogenesis and/or testis development. The sequence is that of Male-enhanced antigen 1 (MEA1) from Sus scrofa (Pig).